The sequence spans 236 residues: Small ribosomal subunit protein uS2c (236 aa).

This sequence belongs to the universal ribosomal protein uS2 family.

It is found in the plastid. The protein resides in the chloroplast. This is Small ribosomal subunit protein uS2c (rps2) from Draba nemorosa (Woodland whitlowgrass).